Here is a 785-residue protein sequence, read N- to C-terminus: Uncoating factor OPG117 (785 aa).

Belongs to the orthopoxvirus OPG117 family. As to quaternary structure, homomultimer; hexamer. Interacts with OPG148.

The protein resides in the host cytoplasm. Multifunctional protein required for genome uncoating and replication. Major viral uncoating protein that is required for the release of the viral genome from incoming viral cores containing the viral DNA genome. Possesses an ATPase activity that is required for hexamerization and uncoating. The sequence is that of Uncoating factor OPG117 (OPG117) from Cynomys gunnisoni (Gunnison's prairie dog).